The following is a 144-amino-acid chain: Austinoid biosynthesis cluster protein S (144 aa).

Belongs to the trt14 isomerase family. Homodimer.

Its pathway is secondary metabolite biosynthesis; terpenoid biosynthesis. Part of the gene cluster that mediates the biosynthesis of calidodehydroaustin, a fungal meroterpenoid. The first step of the pathway is the synthesis of 3,5-dimethylorsellinic acid by the polyketide synthase ausA. 3,5-dimethylorsellinic acid is then prenylated by the polyprenyl transferase ausN. Further epoxidation by the FAD-dependent monooxygenase ausM and cyclization by the probable terpene cyclase ausL lead to the formation of protoaustinoid A. Protoaustinoid A is then oxidized to spiro-lactone preaustinoid A3 by the combined action of the FAD-binding monooxygenases ausB and ausC, and the dioxygenase ausE. Acid-catalyzed keto-rearrangement and ring contraction of the tetraketide portion of preaustinoid A3 by ausJ lead to the formation of preaustinoid A4. The aldo-keto reductase ausK, with the help of ausH, is involved in the next step by transforming preaustinoid A4 into isoaustinone which is in turn hydroxylated by the P450 monooxygenase ausI to form austinolide. The cytochrome P450 monooxygenase ausG modifies austinolide to austinol. Austinol is further acetylated to austin by the O-acetyltransferase ausP, which spontaneously changes to dehydroaustin. The cytochrome P450 monooxygenase ausR then converts dehydroaustin is into 7-dehydrodehydroaustin. The hydroxylation catalyzed by ausR permits the O-acetyltransferase ausQ to add an additional acetyl group to the molecule, leading to the formation of acetoxydehydroaustin. The short chain dehydrogenase ausT catalyzes the reduction of the double bond present between carbon atoms 1 and 2 to convert 7-dehydrodehydroaustin into 1,2-dihydro-7-hydroxydehydroaustin. AusQ catalyzes not only an acetylation reaction but also the addition of the PKS ausV diketide product to 1,2-dihydro-7-hydroxydehydroaustin, forming precalidodehydroaustin. Finally, the iron/alpha-ketoglutarate-dependent dioxygenase converts precalidodehydroaustin into calidodehydroaustin. AusS is necessary for austinoids production and may play a possible function as a regulator. Functionally, may play a possible function as a regulator. The protein is Austinoid biosynthesis cluster protein S of Aspergillus calidoustus.